The sequence spans 187 residues: Elongation factor P (187 aa).

It belongs to the elongation factor P family.

It is found in the cytoplasm. Its pathway is protein biosynthesis; polypeptide chain elongation. In terms of biological role, involved in peptide bond synthesis. Stimulates efficient translation and peptide-bond synthesis on native or reconstituted 70S ribosomes in vitro. Probably functions indirectly by altering the affinity of the ribosome for aminoacyl-tRNA, thus increasing their reactivity as acceptors for peptidyl transferase. In Corynebacterium efficiens (strain DSM 44549 / YS-314 / AJ 12310 / JCM 11189 / NBRC 100395), this protein is Elongation factor P.